The chain runs to 178 residues: Large ribosomal subunit protein uL6 (178 aa).

Belongs to the universal ribosomal protein uL6 family. As to quaternary structure, part of the 50S ribosomal subunit.

In terms of biological role, this protein binds to the 23S rRNA, and is important in its secondary structure. It is located near the subunit interface in the base of the L7/L12 stalk, and near the tRNA binding site of the peptidyltransferase center. The chain is Large ribosomal subunit protein uL6 from Lactiplantibacillus plantarum (strain ATCC BAA-793 / NCIMB 8826 / WCFS1) (Lactobacillus plantarum).